A 306-amino-acid polypeptide reads, in one-letter code: Non-specific ribonucleoside hydrolase RihC (306 aa).

His-235 is a catalytic residue.

The protein belongs to the IUNH family. RihC subfamily.

Hydrolyzes both purine and pyrimidine ribonucleosides with a broad-substrate specificity. This is Non-specific ribonucleoside hydrolase RihC from Salmonella typhi.